Consider the following 409-residue polypeptide: Putative kinase Y4dM (409 aa).

Aspartate 293 serves as the catalytic Proton acceptor.

It belongs to the HipA Ser/Thr kinase family.

This chain is Putative kinase Y4dM, found in Sinorhizobium fredii (strain NBRC 101917 / NGR234).